A 202-amino-acid chain; its full sequence is Sperm-specific H1/protamine-like protein type 1 (202 aa).

Over residues 1–35 (MPSPSRKSRSRSRSRSKSPKRSPAKKARKTPKKPR) the composition is skewed to basic residues. Disordered stretches follow at residues 1–46 (MPSP…PTTL) and 104–202 (KTSA…QFAL). Positions 41-120 (KKPTTLSMIV…GATGSFRVGK (80 aa)) constitute an H15 domain. Residues 126–156 (KKAKKAKSPKKKSSKKSKNKSNNAKAKKSPK) show a composition bias toward basic residues. Residues 177–187 (GARYPFRYQAY) are compositionally biased toward low complexity.

Post-translationally, OE1 and OE3 are produced by post-translational cleavage of a common precursor. In terms of tissue distribution, sperm.

The protein resides in the nucleus. The protein localises to the chromosome. Functionally, linker histones are implicated in chromatin remodeling and/or transcriptional regulation during spermiogenesis, the process of spermatid maturation into spermatozoa. Protamines substitute for histones in the chromatin of sperm during the haploid phase of spermatogenesis. They compact sperm DNA into a highly condensed, stable and inactive complex. The chain is Sperm-specific H1/protamine-like protein type 1 from Ostrea edulis (Native oyster).